The chain runs to 62 residues: MAKTIVIKQIGSPIRRPEKQRQTLIGLGLNKMHKTRELEDTPAVRGMINKIPHMVQIIEEKG.

This sequence belongs to the universal ribosomal protein uL30 family. Part of the 50S ribosomal subunit.

In Dinoroseobacter shibae (strain DSM 16493 / NCIMB 14021 / DFL 12), this protein is Large ribosomal subunit protein uL30.